The following is a 325-amino-acid chain: Phosphate import ATP-binding protein PstB (325 aa).

The ABC transporter domain occupies 79-320; it reads IDNYNLWYSN…PNNEKTKDYI (242 aa). Residue 111-118 coordinates ATP; that stretch reads GPSGCGKS.

It belongs to the ABC transporter superfamily. Phosphate importer (TC 3.A.1.7) family. The complex is composed of two ATP-binding proteins (PstB), two transmembrane proteins (PstC and PstA) and a solute-binding protein (PstS).

It localises to the cell membrane. The catalysed reaction is phosphate(out) + ATP + H2O = ADP + 2 phosphate(in) + H(+). Part of the ABC transporter complex PstSACB involved in phosphate import. Responsible for energy coupling to the transport system. The protein is Phosphate import ATP-binding protein PstB of Mycoplasmoides gallisepticum (strain R(low / passage 15 / clone 2)) (Mycoplasma gallisepticum).